Reading from the N-terminus, the 132-residue chain is L-ectoine synthase (132 aa).

It belongs to the ectoine synthase family.

It carries out the reaction (2S)-4-acetamido-2-aminobutanoate = L-ectoine + H2O. It participates in amine and polyamine biosynthesis; ectoine biosynthesis; L-ectoine from L-aspartate 4-semialdehyde: step 3/3. Catalyzes the circularization of gamma-N-acetyl-alpha,gamma-diaminobutyric acid (ADABA) to ectoine (1,4,5,6-tetrahydro-2-methyl-4-pyrimidine carboxylic acid), which is an excellent osmoprotectant. The protein is L-ectoine synthase of Alkalilimnicola ehrlichii (strain ATCC BAA-1101 / DSM 17681 / MLHE-1).